The primary structure comprises 100 residues: Urease subunit gamma (100 aa).

The protein belongs to the urease gamma subunit family. In terms of assembly, heterotrimer of UreA (gamma), UreB (beta) and UreC (alpha) subunits. Three heterotrimers associate to form the active enzyme.

The protein localises to the cytoplasm. The enzyme catalyses urea + 2 H2O + H(+) = hydrogencarbonate + 2 NH4(+). It functions in the pathway nitrogen metabolism; urea degradation; CO(2) and NH(3) from urea (urease route): step 1/1. The sequence is that of Urease subunit gamma from Saccharopolyspora erythraea (strain ATCC 11635 / DSM 40517 / JCM 4748 / NBRC 13426 / NCIMB 8594 / NRRL 2338).